The following is a 262-amino-acid chain: Phosphomannomutase 1 (262 aa).

An N-acetylalanine modification is found at A2. Residue D19 is the Nucleophile of the active site. Positions 19 and 21 each coordinate Mg(2+). The active-site Proton donor/acceptor is D21. Positions 28, 132, 143, 150, 186, 188, and 190 each coordinate alpha-D-mannose 1-phosphate. Mg(2+)-binding residues include N218, Y230, D232, and T235. S242 bears the Phosphoserine mark.

Belongs to the eukaryotic PMM family. Homodimer. Requires Mg(2+) as cofactor. As to expression, present in brain, where it is restricted to neuronal cell bodies. Present at lower levels in pancreas, liver, lung, gonads, uterus, adrenal glands and pituitary (at protein level). Undetectable in intestine.

The protein localises to the cytoplasm. It catalyses the reaction alpha-D-mannose 1-phosphate = D-mannose 6-phosphate. It participates in nucleotide-sugar biosynthesis; GDP-alpha-D-mannose biosynthesis; alpha-D-mannose 1-phosphate from D-fructose 6-phosphate: step 2/2. With respect to regulation, IMP, a metabolite whose concentration is elevated in anoxia, inhibits phosphomannomutase and phosphoglucomutase activities and strongly enhances glucose-1,6-bisphosphatase activity. Its function is as follows. Involved in the synthesis of the GDP-mannose and dolichol-phosphate-mannose required for a number of critical mannosyl transfer reactions. In addition, may be responsible for the degradation of glucose-1,6-bisphosphate in ischemic brain. The chain is Phosphomannomutase 1 (Pmm1) from Mus musculus (Mouse).